The following is a 477-amino-acid chain: Glycogen synthase (477 aa).

ADP-alpha-D-glucose is bound at residue K15.

It belongs to the glycosyltransferase 1 family. Bacterial/plant glycogen synthase subfamily.

It catalyses the reaction [(1-&gt;4)-alpha-D-glucosyl](n) + ADP-alpha-D-glucose = [(1-&gt;4)-alpha-D-glucosyl](n+1) + ADP + H(+). Its pathway is glycan biosynthesis; glycogen biosynthesis. Its function is as follows. Synthesizes alpha-1,4-glucan chains using ADP-glucose. This Shigella flexneri protein is Glycogen synthase.